We begin with the raw amino-acid sequence, 362 residues long: Probable protein phosphatase 2C 11 (362 aa).

The PPM-type phosphatase domain maps to 23–329 (KLGLSSMQGW…DNMTMVLVQF (307 aa)). Mn(2+)-binding residues include Asp-57, Gly-58, Asp-272, and Asp-320.

It belongs to the PP2C family. It depends on Mg(2+) as a cofactor. Mn(2+) is required as a cofactor.

The catalysed reaction is O-phospho-L-seryl-[protein] + H2O = L-seryl-[protein] + phosphate. It carries out the reaction O-phospho-L-threonyl-[protein] + H2O = L-threonyl-[protein] + phosphate. The polypeptide is Probable protein phosphatase 2C 11 (Oryza sativa subsp. japonica (Rice)).